Reading from the N-terminus, the 493-residue chain is Cytochrome P450 2E1 (493 aa).

Residue 298-303 (FAGTET) participates in substrate binding. Residue C437 participates in heme binding.

Belongs to the cytochrome P450 family. Interacts with chaperones HSP70 and HSP90; this interaction is required for initial targeting to mitochondria. Requires heme as cofactor. As to expression, highest level in the liver and to a lesser extent in the kidney, with a higher level in the male kidney than in the female.

It is found in the endoplasmic reticulum membrane. The protein resides in the microsome membrane. It localises to the mitochondrion inner membrane. The catalysed reaction is an organic molecule + reduced [NADPH--hemoprotein reductase] + O2 = an alcohol + oxidized [NADPH--hemoprotein reductase] + H2O + H(+). It catalyses the reaction (5Z,8Z,11Z)-eicosatrienoate + reduced [NADPH--hemoprotein reductase] + O2 = 19-hydroxy-(5Z,8Z,11Z)-eicosatrienoate + oxidized [NADPH--hemoprotein reductase] + H2O + H(+). The enzyme catalyses (5Z,8Z,11Z,14Z,17Z)-eicosapentaenoate + reduced [NADPH--hemoprotein reductase] + O2 = 19-hydroxy-(5Z,8Z,11Z,14Z,17Z)-eicosapentaenoate + oxidized [NADPH--hemoprotein reductase] + H2O + H(+). It carries out the reaction (4Z,7Z,10Z,13Z,16Z,19Z)-docosahexaenoate + reduced [NADPH--hemoprotein reductase] + O2 = 21-hydroxy-(4Z,7Z,10Z,13Z,16Z,19Z)-docosahexaenoate + oxidized [NADPH--hemoprotein reductase] + H2O + H(+). The catalysed reaction is dodecanoate + reduced [NADPH--hemoprotein reductase] + O2 = 11-hydroxydodecanoate + oxidized [NADPH--hemoprotein reductase] + H2O + H(+). It catalyses the reaction tetradecanoate + reduced [NADPH--hemoprotein reductase] + O2 = 13-hydroxytetradecanoate + oxidized [NADPH--hemoprotein reductase] + H2O + H(+). The enzyme catalyses 4-nitrophenol + NADPH + O2 + H(+) = 4-nitrocatechol + NADP(+) + H2O. It participates in lipid metabolism; fatty acid metabolism. With respect to regulation, the omega-1 hydroxylase activity is stimulated by cytochrome b5. Functionally, a cytochrome P450 monooxygenase involved in the metabolism of fatty acids. Mechanistically, uses molecular oxygen inserting one oxygen atom into a substrate, and reducing the second into a water molecule, with two electrons provided by NADPH via cytochrome P450 reductase (NADPH--hemoprotein reductase). Catalyzes the hydroxylation of carbon-hydrogen bonds. Hydroxylates fatty acids specifically at the omega-1 position displaying the highest catalytic activity for saturated fatty acids. May be involved in the oxidative metabolism of xenobiotics. The chain is Cytochrome P450 2E1 (Cyp2e1) from Mus musculus (Mouse).